The following is a 634-amino-acid chain: Zinc finger and BTB domain-containing protein 22 (634 aa).

In terms of domain architecture, BTB spans 57-121 (CDVSIRVQGR…AYTGRLSMAA (65 aa)). Disordered regions lie at residues 167–247 (TVPG…APVV) and 308–461 (APTP…GTSV). Residues 180–198 (TVAPATMGSARSHASSRAS) show a composition bias toward low complexity. Residues 199–209 (ENQSPSSSNYF) are compositionally biased toward polar residues. At serine 202 the chain carries Phosphoserine. Low complexity predominate over residues 217–229 (FSSSSQEAFAASA). Over residues 317–340 (PDLEEEEEEEDLVLTCEDDEDEEL) the composition is skewed to acidic residues. Positions 452-461 (GAVTVGGTSV) are enriched in low complexity. Residues 486–507 (FLCHCGKAFSHKSMRDRHVNMH) form a C2H2-type 1; atypical zinc finger. C2H2-type zinc fingers lie at residues 513–535 (FDCPVCNKKFKMKHHLTEHMKTH) and 541–562 (YECGVCAKKFMWRDSFMRHRGH). The disordered stretch occupies residues 568–634 (RLGGVGAVPG…MGFGGGGGAN (67 aa)). The span at 608 to 618 (PPSSRRVWSPP) shows a compositional bias: low complexity.

The protein belongs to the krueppel C2H2-type zinc-finger protein family.

It localises to the nucleus. Its function is as follows. May be involved in transcriptional regulation. The protein is Zinc finger and BTB domain-containing protein 22 (ZBTB22) of Homo sapiens (Human).